Consider the following 421-residue polypeptide: UDP-N-acetylglucosamine 1-carboxyvinyltransferase 2 (421 aa).

A phosphoenolpyruvate-binding site is contributed by 22–23; that stretch reads KN. Residue arginine 95 coordinates UDP-N-acetyl-alpha-D-glucosamine. Catalysis depends on cysteine 119, which acts as the Proton donor. Cysteine 119 is modified (2-(S-cysteinyl)pyruvic acid O-phosphothioketal). UDP-N-acetyl-alpha-D-glucosamine-binding positions include 124 to 128, aspartate 308, and valine 330; that span reads RPIEQ.

Belongs to the EPSP synthase family. MurA subfamily.

It is found in the cytoplasm. The enzyme catalyses phosphoenolpyruvate + UDP-N-acetyl-alpha-D-glucosamine = UDP-N-acetyl-3-O-(1-carboxyvinyl)-alpha-D-glucosamine + phosphate. The protein operates within cell wall biogenesis; peptidoglycan biosynthesis. Cell wall formation. Adds enolpyruvyl to UDP-N-acetylglucosamine. The sequence is that of UDP-N-acetylglucosamine 1-carboxyvinyltransferase 2 from Staphylococcus saprophyticus subsp. saprophyticus (strain ATCC 15305 / DSM 20229 / NCIMB 8711 / NCTC 7292 / S-41).